The primary structure comprises 231 residues: MGLKDELTTFCHDVFNGNWETTEGKNVPDEDSRLTLKNTAITIDGTVLYADLDGSTAMVDGYKNWFAAEIYKTYLYCCARIIAAEGGVVTAYDGDRVMALFIGERKNTRAARAAMKIKWAVDEIIMPKKDARYTSNKFALKHVTGIDTCSLFVAKTGARGANDLVWVGRAANYAAKLTSLPSTYTYITESVYKMLADEAKTSNGKSMWEKVTWNTFNNSTIYRSNWRWRID.

The Guanylate cyclase domain occupies 46-178 (TVLYADLDGS…RAANYAAKLT (133 aa)). Tyr49 contributes to the a ribonucleoside 5'-triphosphate binding site. Residues Asp51 and Asp95 each contribute to the Mn(2+) site. Arg96 contacts a ribonucleoside 5'-triphosphate.

The protein belongs to the adenylyl cyclase class-4/guanylyl cyclase family. Pyrimidine cyclase subfamily. As to quaternary structure, homodimer. Mn(2+) is required as a cofactor.

It localises to the cytoplasm. The enzyme catalyses UTP = 3',5'-cyclic UMP + diphosphate. In terms of biological role, pycsar (pyrimidine cyclase system for antiphage resistance) provides immunity against bacteriophage. The pyrimidine cyclase (PycC) synthesizes cyclic nucleotides in response to infection; these serve as specific second messenger signals. The signal activates the adjacent effector, leading to bacterial cell death and abortive phage infection. A clade B Pycsar system. Functionally, the pyrimidine cyclase gene of a two-gene Pycsar system, generates cyclic UMP (cUMP) from UTP probably in response to bacteriophage infection. Expression of this and adjacent effector XpPycTIR (AC P0DV29) confers resistance to bacteriophage T7. When cells expressing the Pycsar system are infected phage T7 at low multiplicity of infection (0.2 MOI) the culture survives, at 2.0 MOI bacteria enter growth arrest. The same cells enter growth arrest after exposure to 2.5 mM cUMP but not cCMP; the effector protein responds only to the cUMP produced by its cognate NTP cyclase. This chain is Uridylate cyclase, found in Xanthomonas perforans.